We begin with the raw amino-acid sequence, 253 residues long: 5'-nucleotidase SurE (253 aa).

Positions 8, 9, 39, and 95 each coordinate a divalent metal cation.

This sequence belongs to the SurE nucleotidase family. The cofactor is a divalent metal cation.

Its subcellular location is the cytoplasm. The catalysed reaction is a ribonucleoside 5'-phosphate + H2O = a ribonucleoside + phosphate. Nucleotidase that shows phosphatase activity on nucleoside 5'-monophosphates. In Clostridium beijerinckii (strain ATCC 51743 / NCIMB 8052) (Clostridium acetobutylicum), this protein is 5'-nucleotidase SurE.